Reading from the N-terminus, the 175-residue chain is ATP synthase subunit b (175 aa).

Residues 20 to 40 form a helical membrane-spanning segment; sequence LIFWTAVTFVIVLLILKQLAW.

It belongs to the ATPase B chain family. In terms of assembly, F-type ATPases have 2 components, F(1) - the catalytic core - and F(0) - the membrane proton channel. F(1) has five subunits: alpha(3), beta(3), gamma(1), delta(1), epsilon(1). F(0) has four main subunits: a(1), b(2) and c(10-14). The alpha and beta chains form an alternating ring which encloses part of the gamma chain. F(1) is attached to F(0) by a central stalk formed by the gamma and epsilon chains, while a peripheral stalk is formed by the delta and b chains.

The protein resides in the cell inner membrane. In terms of biological role, f(1)F(0) ATP synthase produces ATP from ADP in the presence of a proton or sodium gradient. F-type ATPases consist of two structural domains, F(1) containing the extramembraneous catalytic core and F(0) containing the membrane proton channel, linked together by a central stalk and a peripheral stalk. During catalysis, ATP synthesis in the catalytic domain of F(1) is coupled via a rotary mechanism of the central stalk subunits to proton translocation. Its function is as follows. Component of the F(0) channel, it forms part of the peripheral stalk, linking F(1) to F(0). In Chlorobium limicola (strain DSM 245 / NBRC 103803 / 6330), this protein is ATP synthase subunit b.